Consider the following 409-residue polypeptide: Glucan endo-1,6-beta-glucosidase B (409 aa).

The signal sequence occupies residues 1-16 (MKFILPLFTSLPVALA). Asn35 is a glycosylation site (N-linked (GlcNAc...) asparagine). The Proton donor role is filled by Glu228. The Nucleophile role is filled by Glu330.

Belongs to the glycosyl hydrolase 5 (cellulase A) family.

The protein resides in the secreted. The catalysed reaction is Random hydrolysis of (1-&gt;6)-linkages in (1-&gt;6)-beta-D-glucans.. Beta-glucanases participate in the metabolism of beta-glucan, the main structural component of the cell wall. Acts on lutean, pustulan and 1,6-oligo-beta-D-glucosides. The protein is Glucan endo-1,6-beta-glucosidase B (exgB) of Emericella nidulans (strain FGSC A4 / ATCC 38163 / CBS 112.46 / NRRL 194 / M139) (Aspergillus nidulans).